We begin with the raw amino-acid sequence, 426 residues long: Enolase (426 aa).

Gln163 contacts (2R)-2-phosphoglycerate. The active-site Proton donor is the Glu205. Mg(2+) is bound by residues Asp242, Glu285, and Asp312. (2R)-2-phosphoglycerate-binding residues include Lys337, Arg366, Ser367, and Lys388. The active-site Proton acceptor is the Lys337.

The protein belongs to the enolase family. It depends on Mg(2+) as a cofactor.

Its subcellular location is the cytoplasm. The protein resides in the secreted. It localises to the cell surface. The enzyme catalyses (2R)-2-phosphoglycerate = phosphoenolpyruvate + H2O. It functions in the pathway carbohydrate degradation; glycolysis; pyruvate from D-glyceraldehyde 3-phosphate: step 4/5. Its function is as follows. Catalyzes the reversible conversion of 2-phosphoglycerate (2-PG) into phosphoenolpyruvate (PEP). It is essential for the degradation of carbohydrates via glycolysis. This Gluconacetobacter diazotrophicus (strain ATCC 49037 / DSM 5601 / CCUG 37298 / CIP 103539 / LMG 7603 / PAl5) protein is Enolase.